A 418-amino-acid polypeptide reads, in one-letter code: UDP-N-acetylglucosamine 1-carboxyvinyltransferase (418 aa).

22–23 (KN) is a phosphoenolpyruvate binding site. Arg93 contributes to the UDP-N-acetyl-alpha-D-glucosamine binding site. Cys117 acts as the Proton donor in catalysis. Cys117 is modified (2-(S-cysteinyl)pyruvic acid O-phosphothioketal). UDP-N-acetyl-alpha-D-glucosamine is bound by residues Asp306 and Ile328.

It belongs to the EPSP synthase family. MurA subfamily.

The protein localises to the cytoplasm. The catalysed reaction is phosphoenolpyruvate + UDP-N-acetyl-alpha-D-glucosamine = UDP-N-acetyl-3-O-(1-carboxyvinyl)-alpha-D-glucosamine + phosphate. It participates in cell wall biogenesis; peptidoglycan biosynthesis. In terms of biological role, cell wall formation. Adds enolpyruvyl to UDP-N-acetylglucosamine. In Hydrogenovibrio crunogenus (strain DSM 25203 / XCL-2) (Thiomicrospira crunogena), this protein is UDP-N-acetylglucosamine 1-carboxyvinyltransferase.